A 504-amino-acid chain; its full sequence is UDP-GalNAc:beta-1,3-N-acetylgalactosaminyltransferase 2 (504 aa).

Residues 1-3 (MRN) lie on the Cytoplasmic side of the membrane. A helical; Signal-anchor for type II membrane protein transmembrane segment spans residues 4–24 (WLVLLCPCVLGAALHLWHLWL). At 25 to 504 (RSPPDPHNTG…DPCQCEAKVR (480 aa)) the chain is on the lumenal side. 2 N-linked (GlcNAc...) asparagine glycosylation sites follow: N117 and N176.

It belongs to the glycosyltransferase 31 family. Post-translationally, N-glycosylated. In terms of tissue distribution, present in testis (at protein level). In testis, it is mainly detected in the middle layers of seminiferous tubules at stages XII to II. Strongly expressed in primary and secondary spermatocytes and early round spermatids, but not in spermatogonia, elongating or elongated spermatids, or in Leydig or Sertoli cells.

It localises to the golgi apparatus membrane. It is found in the endoplasmic reticulum. The catalysed reaction is 3-O-(N-acetyl-beta-D-glucosaminyl-(1-&gt;4)-alpha-D-mannosyl)-L-threonyl-[protein] + UDP-N-acetyl-alpha-D-galactosamine = 3-O-[beta-D-GalNAc-(1-&gt;3)-beta-D-GlcNAc-(1-&gt;4)-alpha-D-Man]-L-Thr-[protein] + UDP + H(+). Its pathway is protein modification; protein glycosylation. Beta-1,3-N-acetylgalactosaminyltransferase that synthesizes a unique carbohydrate structure, GalNAc-beta-1-3GlcNAc, on N- and O-glycans. Has no galactose nor galactosaminyl transferase activity toward any acceptor substrate. Involved in alpha-dystroglycan (DAG1) glycosylation: acts coordinately with GTDC2/POMGnT2 to synthesize a GalNAc-beta3-GlcNAc-beta-terminus at the 4-position of protein O-mannose in the biosynthesis of the phosphorylated O-mannosyl trisaccharide (N-acetylgalactosamine-beta-3-N-acetylglucosamine-beta-4-(phosphate-6-)mannose), a carbohydrate structure present in alpha-dystroglycan, which is required for binding laminin G-like domain-containing extracellular proteins with high affinity. The polypeptide is UDP-GalNAc:beta-1,3-N-acetylgalactosaminyltransferase 2 (B3galnt2) (Mus musculus (Mouse)).